Here is a 476-residue protein sequence, read N- to C-terminus: Aspartyl/glutamyl-tRNA(Asn/Gln) amidotransferase subunit B (476 aa).

It belongs to the GatB/GatE family. GatB subfamily. Heterotrimer of A, B and C subunits.

The catalysed reaction is L-glutamyl-tRNA(Gln) + L-glutamine + ATP + H2O = L-glutaminyl-tRNA(Gln) + L-glutamate + ADP + phosphate + H(+). It carries out the reaction L-aspartyl-tRNA(Asn) + L-glutamine + ATP + H2O = L-asparaginyl-tRNA(Asn) + L-glutamate + ADP + phosphate + 2 H(+). Functionally, allows the formation of correctly charged Asn-tRNA(Asn) or Gln-tRNA(Gln) through the transamidation of misacylated Asp-tRNA(Asn) or Glu-tRNA(Gln) in organisms which lack either or both of asparaginyl-tRNA or glutaminyl-tRNA synthetases. The reaction takes place in the presence of glutamine and ATP through an activated phospho-Asp-tRNA(Asn) or phospho-Glu-tRNA(Gln). The chain is Aspartyl/glutamyl-tRNA(Asn/Gln) amidotransferase subunit B from Lactobacillus acidophilus (strain ATCC 700396 / NCK56 / N2 / NCFM).